The chain runs to 210 residues: Cytochrome c oxidase subunit 2 (210 aa).

Residues 1 to 20 (MAFILSFWMIFLLDSVIVLL) lie on the Mitochondrial intermembrane side of the membrane. The chain crosses the membrane as a helical span at residues 21–42 (SFVCFVCVWICALLFSTVLLVS). At 43 to 60 (KLNNIYCTWDFTASKFID) the chain is on the mitochondrial matrix side. A helical transmembrane segment spans residues 61–86 (VYWFTIGGMFSLGLLLRLCLLLYFGH). The Mitochondrial intermembrane segment spans residues 87 to 210 (LNFVSFDLCK…GFMPIVICFI (124 aa)). 6 residues coordinate Cu cation: His157, Cys192, Glu194, Cys196, His200, and Met203. Residue Glu194 participates in Mg(2+) binding.

Belongs to the cytochrome c oxidase subunit 2 family. Component of the cytochrome c oxidase (complex IV, CIV), a multisubunit enzyme composed of a catalytic core of 3 subunits and several supernumerary subunits. The complex exists as a monomer or a dimer and forms supercomplexes (SCs) in the inner mitochondrial membrane with ubiquinol-cytochrome c oxidoreductase (cytochrome b-c1 complex, complex III, CIII). The cofactor is Cu cation.

It localises to the mitochondrion inner membrane. The catalysed reaction is 4 Fe(II)-[cytochrome c] + O2 + 8 H(+)(in) = 4 Fe(III)-[cytochrome c] + 2 H2O + 4 H(+)(out). Its function is as follows. Component of the cytochrome c oxidase, the last enzyme in the mitochondrial electron transport chain which drives oxidative phosphorylation. The respiratory chain contains 3 multisubunit complexes succinate dehydrogenase (complex II, CII), ubiquinol-cytochrome c oxidoreductase (cytochrome b-c1 complex, complex III, CIII) and cytochrome c oxidase (complex IV, CIV), that cooperate to transfer electrons derived from NADH and succinate to molecular oxygen, creating an electrochemical gradient over the inner membrane that drives transmembrane transport and the ATP synthase. Cytochrome c oxidase is the component of the respiratory chain that catalyzes the reduction of oxygen to water. Electrons originating from reduced cytochrome c in the intermembrane space (IMS) are transferred via the dinuclear copper A center (CU(A)) of subunit 2 and heme A of subunit 1 to the active site in subunit 1, a binuclear center (BNC) formed by heme A3 and copper B (CU(B)). The BNC reduces molecular oxygen to 2 water molecules using 4 electrons from cytochrome c in the IMS and 4 protons from the mitochondrial matrix. The protein is Cytochrome c oxidase subunit 2 of Leishmania tarentolae (Sauroleishmania tarentolae).